The chain runs to 2067 residues: Nuclear receptor coactivator 6 (2067 aa).

The segment at 1-932 is TBP/GTF2A-binding region; the sequence is MVLDDLPNFE…PPRKKKNCHQ (932 aa). The interval 1-1060 is CREBBP-binding region; it reads MVLDDLPNFE…LPVSQNVHPP (1060 aa). The NCOA1-binding region stretch occupies residues 1-1314; it reads MVLDDLPNFE…QAHKLDSVVV (1314 aa). At arginine 95 the chain carries Asymmetric dimethylarginine. 2 disordered regions span residues 181-253 and 293-548; these read AVMT…RQMN and TRPL…PGNS. A compositionally biased stretch (low complexity) spans 293–304; sequence TRPLQQHQQQPQ. Composition is skewed to polar residues over residues 338–347, 357–372, 383–405, 421–457, 465–506, and 526–548; these read SLGTMTTNQG, MQAQLQARPSLATVQT, GSQQASQAHTNFPQMSNPGQFTA, PLQQPHLTNKSPASSPSSFQQGSPASSPTVNQTQQQM, NPLS…QGPQ, and GQANPNFMQGQVPSTTAATPGNS. Residues 777 to 931 are NCOA6IP-binding region; the sequence is VNNSPSQVMG…KPPRKKKNCH (155 aa). Serine 888 carries the phosphoserine modification. Residues 891-895 carry the LXXLL motif 1 motif; it reads LVNLL. Disordered stretches follow at residues 903 to 1279, 1313 to 1358, 1424 to 1481, 1497 to 1581, and 1769 to 1822; these read HFGV…QGLN, VVNS…APKL, NIPQ…EENK, QLLD…IPPV, and LNPD…GKGK. The segment covering 907–916 has biased composition (low complexity); it reads NNKQNNTNAN. Positions 917-929 are enriched in basic residues; sequence KPKKKKPPRKKKN. Positions 984–996 are enriched in low complexity; it reads QRPLPQMPPQLMQ. Residues 999 to 1024 are compositionally biased toward pro residues; the sequence is APPPQPPQQQPQPQLPQQQQPPPPSQ. Over residues 1025–1044 the composition is skewed to low complexity; the sequence is PQSQQQQQQQQMMMMLMMQQ. 2 positions are modified to asymmetric dimethylarginine: arginine 1050 and arginine 1061. The segment covering 1066–1078 has biased composition (polar residues); that stretch reads PDSQRMPVQQSGN. Arginine 1099 is subject to Asymmetric dimethylarginine. Over residues 1103-1123 the composition is skewed to polar residues; it reads SVNTPMGSNSRKMVYQENPQN. Positions 1124 to 1137 are enriched in low complexity; that stretch reads SSSSPLGEMSSLPE. Composition is skewed to polar residues over residues 1152–1165, 1176–1194, and 1205–1217; these read NMPSHLVVSQNQLM, LSATQGATPQQPPVNSLPS, and APTQTSRPKTPNR. The segment covering 1222-1235 has biased composition (pro residues); it reads PYYPQTPNNRPPST. Residues 1313–1324 show a composition bias toward polar residues; the sequence is VVNSGKQSNPGT. Residues 1326–1349 show a composition bias toward low complexity; sequence KRASPSNSRRSSPGSSRKTTPSPG. Positions 1424–1435 are enriched in polar residues; that stretch reads NIPQDSDCQNAQ. The LXXLL motif 2 motif lies at 1495–1499; that stretch reads LSQLL. A compositionally biased stretch (low complexity) spans 1545 to 1562; it reads EPSTSLSSPHSSEPCSTL. Residues 1644–2067 form an EP300/CRSP3-binding region region; that stretch reads SEGQSAAQSN…AVQSKRRKSK (424 aa). Residues 1775–1805 show a composition bias toward polar residues; sequence SPQTNTSADQSTLPPSQPTTVVSSLLTNSPG. Positions 1806–1818 are enriched in low complexity; the sequence is SSANRRSPVSSSK. 2 positions are modified to N6-acetyllysine: lysine 1822 and lysine 1825. Disordered stretches follow at residues 1840 to 1911 and 1957 to 2067; these read GSLE…LPGG and VGSH…RKSK. Residues 1871–1883 show a composition bias toward polar residues; sequence EQCSTELDSKTPT. Low complexity predominate over residues 1892–1904; that stretch reads MTSSPMAPSSTST. Over residues 2005–2014 the composition is skewed to basic and acidic residues; sequence EPKEIVEKSK. Serine 2022 carries the post-translational modification Phosphoserine.

In terms of assembly, monomer and homodimer. Interacts in vitro with the basal transcription factors GTF2A and TBP, suggesting an autonomous transactivation function. Interacts with NCOA1, CRSP3, RBM14, the histone acetyltransferase proteins EP300 and CREBBP, and with methyltransferase proteins NCOA6IP and PRMT2. Interacts with RBM39. Component of the MLL2/3 complex (also named ASCOM complex), at least composed of KMT2D/MLL2 or KMT2C/MLL3, ASH2L, RBBP5, WDR5, NCOA6, DPY30, KDM6A, PAXIP1/PTIP, PAGR1 and alpha- and beta-tubulin. Interacts with ZNF335; may enhance ligand-dependent transcriptional activation by nuclear hormone receptors. Phosphorylated. As to expression, widely expressed. High expression in testis and weak expression in small intestine.

The protein resides in the nucleus. Nuclear receptor coactivator that directly binds nuclear receptors and stimulates the transcriptional activities in a hormone-dependent fashion. Coactivates expression in an agonist- and AF2-dependent manner. Involved in the coactivation of different nuclear receptors, such as for steroids (GR and ERs), retinoids (RARs and RXRs), thyroid hormone (TRs), vitamin D3 (VDR) and prostanoids (PPARs). Probably functions as a general coactivator, rather than just a nuclear receptor coactivator. May also be involved in the coactivation of the NF-kappa-B pathway. May coactivate expression via a remodeling of chromatin and its interaction with histone acetyltransferase proteins. Involved in placental, cardiac, hepatic and embryonic development. The sequence is that of Nuclear receptor coactivator 6 (Ncoa6) from Mus musculus (Mouse).